A 567-amino-acid chain; its full sequence is ERO1-like protein 2 (567 aa).

A signal peptide spans Met1–Cys22. Residue Asn49 is glycosylated (N-linked (GlcNAc...) asparagine). Intrachain disulfides connect Cys88–Cys386, Cys98–Cys103, Cys154–Cys325, and Cys389–Cys392. 6 residues coordinate FAD: Arg188, Thr190, Trp201, Ser258, His261, and Lys290. The Nucleophile role is filled by Cys389. Cys392 is a catalytic residue. A glycan (N-linked (GlcNAc...) asparagine) is linked at Asn546.

Belongs to the EROs family. May function both as a monomer and a homodimer. FAD is required as a cofactor. Post-translationally, N-glycosylated.

The protein resides in the endoplasmic reticulum membrane. Functionally, essential oxidoreductase that oxidizes proteins in the endoplasmic reticulum to produce disulfide bonds. Acts by oxidizing directly pdi1 isomerase through a direct disulfide exchange. Does not act as a direct oxidant of folding substrate, but relies on pdi1 to transfer oxidizing equivalent. Does not oxidize all pdi related proteins, suggesting that it can discriminate between pdi1 and related proteins. Its reoxidation probably involves electron transfer to molecular oxygen via FAD. Acts independently of glutathione. May be responsible for a significant proportion of reactive oxygen species (ROS) in the cell, thereby being a source of oxidative stress. The polypeptide is ERO1-like protein 2 (ero12) (Schizosaccharomyces pombe (strain 972 / ATCC 24843) (Fission yeast)).